The following is a 505-amino-acid chain: Alpha-1-syntrophin (505 aa).

The disordered stretch occupies residues 1-77 (MASGRRAPRT…AEPGAASPPL (77 aa)). PH domains follow at residues 6–269 (RAPR…AQVN) and 293–401 (DIKR…DGCH). Residues 87-170 (RVTVRKADAG…EVVLEVKYMK (84 aa)) enclose the PDZ domain. Phosphoserine is present on residues S101, S184, S189, S193, and S200. The interval 180–211 (ASGTSVGWDSPPASPLQRQPSSPGPPPRDLRD) is disordered. One can recognise an SU domain in the interval 449–505 (PFEKLQMSSDDGASLLFLDFGGAEGEIQLDLHSCPKTMVFIIHSFLSAKVTRLGLLA). A calmodulin-binding region spans residues 483-505 (PKTMVFIIHSFLSAKVTRLGLLA).

Belongs to the syntrophin family. Monomer and homodimer. Interacts with the dystrophin related protein DTNA; SGCG of the dystrophin glycoprotein complex; NOS1; GRB2; GA; TGFA; MAPK12 and the sodium channel proteins SCN4A and SCN5A. Interacts with the dystrophin protein DMD in a calmodulin dependent manner and with related protein UTRN; SGCA of the dystrophin glycoprotein complex; F-actin; calmodulin and with the other members of the syntrophin family SNTB1 and SNTB2. Interacts with MYOC; regulates muscle hypertrophy. Interacts with DTNB. Phosphorylated by CaM-kinase II. Phosphorylation may inhibit the interaction with DMD.

Its subcellular location is the cell membrane. It localises to the sarcolemma. The protein resides in the cell junction. The protein localises to the cytoplasm. It is found in the cytoskeleton. Its function is as follows. Adapter protein that binds to and probably organizes the subcellular localization of a variety of membrane proteins. May link various receptors to the actin cytoskeleton and the extracellular matrix via the dystrophin glycoprotein complex. Plays an important role in synapse formation and in the organization of UTRN and acetylcholine receptors at the neuromuscular synapse. Binds to phosphatidylinositol 4,5-bisphosphate. In Bos taurus (Bovine), this protein is Alpha-1-syntrophin (SNTA1).